The following is a 546-amino-acid chain: High-affinity glucose transporter ght5 (546 aa).

Over 1–9 the chain is Cytoplasmic; the sequence is MGKNLTIVM. Residues 10–30 form a helical membrane-spanning segment; the sequence is LVFVSMAGWMFGADTGSIGGI. The Extracellular segment spans residues 31–58; the sequence is TNMRDFQSRFADRYNPVTDSYSYSSARQ. Residues 59 to 79 traverse the membrane as a helical segment; that stretch reads GLITGMVNVGSFFGCFLSSPL. Topologically, residues 80–87 are cytoplasmic; the sequence is MDRIGKRT. Residues 88–108 traverse the membrane as a helical segment; the sequence is SIMFWTIVYLIGIILQVTAVP. The Extracellular segment spans residues 109 to 112; it reads SWVQ. The helical transmembrane segment at 113–133 threads the bilayer; it reads IMVAKIWTGLSIGALSVLAPG. Residues 134-144 are Cytoplasmic-facing; the sequence is FQSEVAPADLR. The helical transmembrane segment at 145–165 threads the bilayer; sequence GTIVTTYQLAVTGGIFIAACI. Topologically, residues 166-179 are extracellular; it reads NMGTHKLHKTAQWR. Residues 180–200 form a helical membrane-spanning segment; that stretch reads VSMGINLLWGIITFIGISFLP. At 201-266 the chain is on the cytoplasmic side; it reads ESPRYLISVG…IFGPDIRYRT (66 aa). Residues 267–285 form a helical membrane-spanning segment; it reads FLGLGVMSLQQLTGDNYYF. Over 286 to 301 the chain is Extracellular; sequence YYGFEVFEGTGMNSPY. Residues 302–322 traverse the membrane as a helical segment; it reads LSALILDAVNFGCTFGGLFVL. Residues 323 to 328 are Cytoplasmic-facing; the sequence is EFFGRR. The chain crosses the membrane as a helical span at residues 329–349; it reads MPLIIGALWQSITFFIYAAVG. The Extracellular segment spans residues 350–363; the sequence is NRALTRKNGTSNHR. The N-linked (GlcNAc...) asparagine glycan is linked to asparagine 357. A helical membrane pass occupies residues 364–384; it reads AGAVMIVFSCLFIFSFAQTWG. At 385–404 the chain is on the cytoplasmic side; sequence PAAYVIVGESYPIRYRSKCA. The helical transmembrane segment at 405-425 threads the bilayer; it reads AVATTGNWLWGFLISFFTPFI. The Extracellular portion of the chain corresponds to 426-432; the sequence is TNSIGFK. A helical transmembrane segment spans residues 433–453; that stretch reads YGYIFAACNLCAACIIFLFAH. The Cytoplasmic segment spans residues 454-546; sequence ETKGLTLEEI…SYHDQEEQFA (93 aa). The segment at 486–546 is disordered; sequence KQQEEVREKS…SYHDQEEQFA (61 aa). A compositionally biased stretch (basic and acidic residues) spans 487 to 496; sequence QQEEVREKSR. A compositionally biased stretch (acidic residues) spans 509–519; the sequence is VDGEEGIEDSS. Residues 520 to 529 are compositionally biased toward low complexity; that stretch reads NDISSTTSSD. Phosphoserine occurs at positions 528 and 537. The span at 530–546 shows a compositional bias: basic and acidic residues; the sequence is GRAKPESSYHDQEEQFA.

The protein belongs to the major facilitator superfamily. Sugar transporter (TC 2.A.1.1) family.

Its subcellular location is the membrane. Its function is as follows. High-affinity glucose transporter. The protein is High-affinity glucose transporter ght5 (ght5) of Schizosaccharomyces pombe (strain 972 / ATCC 24843) (Fission yeast).